Consider the following 345-residue polypeptide: Ferrochelatase (345 aa).

Fe cation-binding residues include His192 and Glu295.

Belongs to the ferrochelatase family.

It localises to the cytoplasm. The catalysed reaction is heme b + 2 H(+) = protoporphyrin IX + Fe(2+). Its pathway is porphyrin-containing compound metabolism; protoheme biosynthesis; protoheme from protoporphyrin-IX: step 1/1. In terms of biological role, catalyzes the ferrous insertion into protoporphyrin IX. The chain is Ferrochelatase from Opitutus terrae (strain DSM 11246 / JCM 15787 / PB90-1).